A 220-amino-acid polypeptide reads, in one-letter code: Probable glutathione S-transferase parA (220 aa).

In terms of domain architecture, GST N-terminal spans Asn4–Cys83. Glutathione is bound by residues Ser14, Lys41, Ile55, and Glu67–Ser68. Residues Asp89 to Phe209 enclose the GST C-terminal domain.

Belongs to the GST superfamily. HSP26 family.

It carries out the reaction RX + glutathione = an S-substituted glutathione + a halide anion + H(+). The protein is Probable glutathione S-transferase parA (PARA) of Nicotiana tabacum (Common tobacco).